Consider the following 152-residue polypeptide: Large ribosomal subunit protein bL9 (152 aa).

Belongs to the bacterial ribosomal protein bL9 family.

Binds to the 23S rRNA. The chain is Large ribosomal subunit protein bL9 from Mycobacterium ulcerans (strain Agy99).